The sequence spans 251 residues: MNGMSTGTLVLLRHGESEWNALNLFTGWVDVHLTDKGIAEGKRAGELLLEHNLLPDVLYTSLLRRAISTANIALDTADRHWIPVIRDWRLNERHYGALQGRNKAQVKEKYGDEQFMLWRRSYDTPPPPIEAGSEYSQDTDPRYANLDKVPLTECLKDVVVRLIPYWEDTISADLKAGKTVLITAHGNSLRALVKHLDGISDEDIAGLNIPTGIPLRYDLDENLKPLNPGGTYLDPEAAAAGAAAVANQGGK.

Residues 13–20 (RHGESEWN), 26–27 (TG), Arg-65, 92–95 (ERHY), Lys-103, 119–120 (RR), and 186–187 (GN) each bind substrate. His-14 acts as the Tele-phosphohistidine intermediate in catalysis. Residue Glu-92 is the Proton donor/acceptor of the active site.

The protein belongs to the phosphoglycerate mutase family. BPG-dependent PGAM subfamily.

It catalyses the reaction (2R)-2-phosphoglycerate = (2R)-3-phosphoglycerate. The protein operates within carbohydrate degradation; glycolysis; pyruvate from D-glyceraldehyde 3-phosphate: step 3/5. Its function is as follows. Catalyzes the interconversion of 2-phosphoglycerate and 3-phosphoglycerate. The polypeptide is 2,3-bisphosphoglycerate-dependent phosphoglycerate mutase (Rhodococcus jostii (strain RHA1)).